Consider the following 147-residue polypeptide: MTSFKLVKYIPRIKKKKSGLRKLARKVPTDRLLKFERIFKAQKRINMSVFKAQRVLDEIRWRYYEETVMILNLMPYRASYPILKLVYSASANATHYRNFDKANLFITKAEVSRSTIMKKFRPRARGRSFPIKKNMCHITIILNIVKK.

The protein belongs to the universal ribosomal protein uL22 family. As to quaternary structure, part of the 50S ribosomal subunit.

It is found in the plastid. The protein localises to the chloroplast. In terms of biological role, this protein binds specifically to 23S rRNA. The globular domain of the protein is located near the polypeptide exit tunnel on the outside of the subunit, while an extended beta-hairpin is found that lines the wall of the exit tunnel in the center of the 70S ribosome. This chain is Large ribosomal subunit protein uL22c (rpl22), found in Lolium perenne (Perennial ryegrass).